Consider the following 837-residue polypeptide: Periplasmic nitrate reductase (837 aa).

The tat-type signal signal peptide spans 1 to 31 (MKLNRRDFIKANAAAAAISAAGLSVPGAAVA). The 4Fe-4S Mo/W bis-MGD-type domain maps to 37–93 (IRWDKAACRFCGTGCGVLVGTQDGRVVATQGDPDAPVNRGLNCIKGYFLSKIMYGAD). [4Fe-4S] cluster-binding residues include cysteine 44, cysteine 47, cysteine 51, and cysteine 79. Residues lysine 81, glutamine 148, asparagine 173, cysteine 177, 210–217 (WGSNMAEM), 241–245 (STFEH), and 260–262 (QTD) each bind Mo-bis(molybdopterin guanine dinucleotide). Residues 308–329 (EKNATSNGYPDADGKPKGDTGK) form a disordered region. Positions 319-329 (ADGKPKGDTGK) are enriched in basic and acidic residues. Mo-bis(molybdopterin guanine dinucleotide)-binding positions include methionine 381, glutamine 385, asparagine 491, 517–518 (SD), lysine 540, aspartate 567, and 727–736 (TGRVLEHWHT). A substrate-binding site is contributed by phenylalanine 803. Residues asparagine 811 and lysine 828 each coordinate Mo-bis(molybdopterin guanine dinucleotide).

It belongs to the prokaryotic molybdopterin-containing oxidoreductase family. NasA/NapA/NarB subfamily. In terms of assembly, component of the periplasmic nitrate reductase NapAB complex composed of NapA and NapB. It depends on [4Fe-4S] cluster as a cofactor. Mo-bis(molybdopterin guanine dinucleotide) is required as a cofactor. Post-translationally, predicted to be exported by the Tat system. The position of the signal peptide cleavage has not been experimentally proven.

The protein localises to the periplasm. The enzyme catalyses 2 Fe(II)-[cytochrome] + nitrate + 2 H(+) = 2 Fe(III)-[cytochrome] + nitrite + H2O. Its function is as follows. Catalytic subunit of the periplasmic nitrate reductase complex NapAB. Receives electrons from NapB and catalyzes the reduction of nitrate to nitrite. The protein is Periplasmic nitrate reductase of Dechloromonas aromatica (strain RCB).